The following is a 1058-amino-acid chain: Vacuolar protein sorting-associated protein 54 (1058 aa).

The stretch at 369–389 (SKKIVEVHERYEQKKKLLAKL) forms a coiled coil.

Belongs to the VPS54 family. As to quaternary structure, component of the Golgi-associated retrograde protein (GARP) complex, also called VFT (VPS fifty-three) complex, composed of vps-51, vps-52, vps-53 and vps-54. Within the complex interacts with vps-52 and vps-53.

Its subcellular location is the golgi apparatus. The protein localises to the trans-Golgi network. Its function is as follows. Acts as a component of the GARP complex that is involved in retrograde transport from early and late endosomes to the trans-Golgi network (TGN). The GARP complex facilitates tethering as well as SNARE complex assembly at the Golgi. This Caenorhabditis elegans protein is Vacuolar protein sorting-associated protein 54.